A 280-amino-acid chain; its full sequence is Undecaprenyl-diphosphatase (280 aa).

The next 8 membrane-spanning stretches (helical) occupy residues 3-23, 45-65, 88-108, 115-135, 150-170, 191-211, 225-245, and 255-275; these read IILL…EFLP, VDLF…YDYW, QLGL…FTFA, LFNP…IFYV, VSLK…IPGT, AEFS…LDFI, VLGI…RLLV, and IFAW…WGFG.

This sequence belongs to the UppP family.

The protein resides in the cell inner membrane. It carries out the reaction di-trans,octa-cis-undecaprenyl diphosphate + H2O = di-trans,octa-cis-undecaprenyl phosphate + phosphate + H(+). Catalyzes the dephosphorylation of undecaprenyl diphosphate (UPP). Confers resistance to bacitracin. The protein is Undecaprenyl-diphosphatase of Psychrobacter cryohalolentis (strain ATCC BAA-1226 / DSM 17306 / VKM B-2378 / K5).